The sequence spans 166 residues: Keratin, type II cytoskeletal 68 kDa, component IB (166 aa).

Residues 1–41 (EAKDDLARLLRDYQDAMNVKLALDVEIATYRKLLEGEECRM) enclose the IF rod domain. Residues 1–41 (EAKDDLARLLRDYQDAMNVKLALDVEIATYRKLLEGEECRM) form a coil 2B region. The interval 42-166 (SGECPSAVSI…FSQSSQRTSR (125 aa)) is tail. Over residues 122–146 (GFGGGSSGFGSGSGGRSGVSGGGLS) the composition is skewed to gly residues. The segment at 122–166 (GFGGGSSGFGSGSGGRSGVSGGGLSSGSSRGGSVRFSQSSQRTSR) is disordered. The segment covering 147 to 166 (SGSSRGGSVRFSQSSQRTSR) has biased composition (low complexity).

Belongs to the intermediate filament family. Heterotetramer of two type I and two type II keratins.

In Bos taurus (Bovine), this protein is Keratin, type II cytoskeletal 68 kDa, component IB.